Here is an 84-residue protein sequence, read N- to C-terminus: Acyl carrier protein homolog (84 aa).

The Carrier domain occupies 4 to 79 (HEILLKIKEI…DLVLEVKNLL (76 aa)). Serine 39 is modified (O-(pantetheine 4'-phosphoryl)serine).

4'-phosphopantetheine is transferred from CoA to a specific serine of the apo-ACP-like protein.

Its pathway is lipid metabolism; fatty acid biosynthesis. Its function is as follows. Carrier of the growing fatty acid chain in fatty acid biosynthesis. The polypeptide is Acyl carrier protein homolog (Mycoplasma genitalium (strain ATCC 33530 / DSM 19775 / NCTC 10195 / G37) (Mycoplasmoides genitalium)).